Consider the following 515-residue polypeptide: Alpha-1B adrenergic receptor (515 aa).

At 1–45 (MNPDLDTGHNTSAPAQWGELKDANFTGPNQTSSNSTLPQLDVTRA) the chain is on the extracellular side. Asn10, Asn24, and Asn34 each carry an N-linked (GlcNAc...) asparagine glycan. The chain crosses the membrane as a helical span at residues 46 to 70 (ISVGLVLGAFILFAIVGNILVILSV). Residues 71–83 (ACNRHLRTPTNYF) lie on the Cytoplasmic side of the membrane. The chain crosses the membrane as a helical span at residues 84–105 (IVNLAIADLLLSFTVLPFSATL). Residues 106 to 115 (EVLGYWVLGR) are Extracellular-facing. The helical transmembrane segment at 116–141 (IFCDIWAAVDVLCCTASILSLCAISI) threads the bilayer. Cys118 and Cys195 are disulfide-bonded. Topologically, residues 142–161 (DRYIGVRYSLQYPTLVTRRK) are cytoplasmic. The chain crosses the membrane as a helical span at residues 162-184 (AILALLSVWVLSTVISIGPLLGW). Topologically, residues 185 to 201 (KEPAPNDDKECGVTEEP) are extracellular. The helical transmembrane segment at 202–224 (FYALFSSLGSFYIPLAVILVMYC) threads the bilayer. Residues 225 to 295 (RVYIVAKRTT…FSREKKAAKT (71 aa)) are Cytoplasmic-facing. At Thr264 the chain carries Phosphothreonine. A helical membrane pass occupies residues 296–319 (LGIVVGMFILCWLPFFIALPLGSL). The Extracellular portion of the chain corresponds to 320–326 (FSTLKPP). The chain crosses the membrane as a helical span at residues 327–351 (DAVFKVVFWLGYFNSCLNPIIYPCS). Residues 352-515 (SKEFKRAFMR…SNMPLAPGHF (164 aa)) lie on the Cytoplasmic side of the membrane. Cys365 carries the S-palmitoyl cysteine lipid modification. Residues 368 to 378 (RSGRRRRRRRR) carry the Nuclear localization signal motif. Disordered regions lie at residues 392–428 (GGSL…SPGY) and 473–515 (LLGE…PGHF). Residues 410-424 (SCMSGSQRTLPSASP) show a composition bias toward polar residues.

This sequence belongs to the G-protein coupled receptor 1 family. Adrenergic receptor subfamily. ADRA1B sub-subfamily. In terms of assembly, homo- and heterooligomer. Heterooligomerizes with ADRA1B homooligomers in cardiac myocytes. Interacts with CAVIN4.

Its subcellular location is the nucleus membrane. The protein localises to the cell membrane. It is found in the cytoplasm. It localises to the membrane. The protein resides in the caveola. In terms of biological role, this alpha-adrenergic receptor mediates its action by association with G proteins that activate a phosphatidylinositol-calcium second messenger system. Its effect is mediated by G(q) and G(11) proteins. Nuclear ADRA1A-ADRA1B heterooligomers regulate phenylephrine (PE)-stimulated ERK signaling in cardiac myocytes. In Mesocricetus auratus (Golden hamster), this protein is Alpha-1B adrenergic receptor (ADRA1B).